The chain runs to 652 residues: Set1 complex component ash2 (652 aa).

A disordered region spans residues 1 to 32; it reads MLAHGSNDYGVSLKGNKTGSSPSKASSLNWNE. Polar residues predominate over residues 15-32; the sequence is GNKTGSSPSKASSLNWNE. Residues 40-94 form a PHD-type zinc finger; it reads NTYCYCGKDRNLRFPDLQCSVCLNMFHLSCLSPPCTSMMGFSTNYQFVCKHCTED. Cys-43, Cys-45, Cys-58, Cys-61, His-66, Cys-69, Cys-88, and Cys-91 together coordinate Zn(2+). The interval 234 to 270 is disordered; sequence RLVETETPPPSSSKLKEDYKDSKREMKRSNTPWSNAS. The segment covering 247-261 has biased composition (basic and acidic residues); the sequence is KLKEDYKDSKREMKR. The region spanning 330–519 is the B30.2/SPRY domain; the sequence is EAAKDLPNVM…KHNRYIDLPY (190 aa).

Belongs to the cclA family. In terms of assembly, component of the Set1 complex composed of ash2, sdc1, set1, shg1, spp1, swd1, swd2 and swd3. Component of the Lid2 complex composed of ash2, jmj3, lid2, sdc1 and snt2.

It is found in the nucleus. Component of the COMPASS (Set1C) complex that specifically mono-, di- and trimethylates histone H3 to form H3K4me1/2/3, which subsequently plays a role in telomere length maintenance and transcription elongation regulation. Regulates MAPK pathway and sporulation through H3K4 methylation. In Schizosaccharomyces pombe (strain 972 / ATCC 24843) (Fission yeast), this protein is Set1 complex component ash2.